We begin with the raw amino-acid sequence, 739 residues long: Transcription regulator protein BACH1 (739 aa).

The 67-residue stretch at 34–100 (CDVTVLVEGQ…AYTAKLILSK (67 aa)) folds into the BTB domain. At S196 the chain carries Phosphoserine. Disordered stretches follow at residues 287–321 (MESE…PHGL) and 344–391 (KTVK…RSSV). Basic and acidic residues-rich tracts occupy residues 346 to 364 (VKTE…KPSE) and 376 to 391 (PKED…RSSV). S448 carries the post-translational modification Phosphoserine. A bZIP domain is found at 560–623 (CIHDIRRRSK…GETKQNLTGL (64 aa)). The basic motif stretch occupies residues 565-581 (RRRSKNRIAAQRCRKRK). The tract at residues 585–592 (IQNLESEI) is leucine-zipper. Residues 679–708 (PPTAPPPCGRGSSAASQELVQESPPTTAAA) form a disordered region. The segment covering 699 to 708 (QESPPTTAAA) has biased composition (low complexity).

The protein belongs to the bZIP family. CNC subfamily. In terms of assembly, heterodimer of BACH1 and MAFK. Post-translationally, ubiquitinated by the SCF(FBXL17) complex or by the by the SCF(FBXO22) complex, leading to its degradation by the proteasome. Under oxidative stress, reactive oxygen species covalently modify cysteine residues on the bZIP domain of BACH1 and release it from chromatin. If the BTB domain of BACH1 remains intact, its beta1-alpha6 degron is recognized by FBXO22, promoting its ubiquitination and degradation. If the structural integrity of the beta1-alpha6 degron is compromised, FBXL17 will transiently associate with the BACH1 BTB dimer and remodel it into stably bound monomer for ubiquitination and degradation. In terms of tissue distribution, ubiquitous.

It localises to the nucleus. Transcriptional regulator that acts as a repressor or activator, depending on the context. Binds to NF-E2 DNA binding sites. Plays important roles in coordinating transcription activation and repression by MAFK. Together with MAF, represses the transcription of genes under the control of the NFE2L2 oxidative stress pathway. The chain is Transcription regulator protein BACH1 (Bach1) from Mus musculus (Mouse).